The chain runs to 41 residues: Photosystem I reaction center subunit IX (41 aa).

A helical transmembrane segment spans residues 7–27 (YLSTAPVITAIWLGITAGILI).

It belongs to the PsaJ family.

The protein resides in the cellular thylakoid membrane. In terms of biological role, may help in the organization of the PsaE and PsaF subunits. The sequence is that of Photosystem I reaction center subunit IX from Cyanothece sp. (strain PCC 7425 / ATCC 29141).